The following is a 1107-amino-acid chain: DNA-directed RNA polymerase subunit beta (1107 aa).

Residues 1062 to 1075 show a composition bias toward basic and acidic residues; the sequence is DNEGNEKEKARELG. The disordered stretch occupies residues 1062 to 1081; sequence DNEGNEKEKARELGLDLPDN.

It belongs to the RNA polymerase beta chain family. The RNAP catalytic core consists of 2 alpha, 1 beta, 1 beta' and 1 omega subunit. When a sigma factor is associated with the core the holoenzyme is formed, which can initiate transcription.

It carries out the reaction RNA(n) + a ribonucleoside 5'-triphosphate = RNA(n+1) + diphosphate. In terms of biological role, DNA-dependent RNA polymerase catalyzes the transcription of DNA into RNA using the four ribonucleoside triphosphates as substrates. The sequence is that of DNA-directed RNA polymerase subunit beta from Syntrophomonas wolfei subsp. wolfei (strain DSM 2245B / Goettingen).